The sequence spans 309 residues: MNKANIFCTDTNMKVILFSEVSVGISANSILFISHLCMFLGESRPKPIDLYIAFFSLTHLMLLVTMGLIAVDMFMPGGRWDSTTCTFLMYLHIVLRGPTLCATCLLNVLWTITLSPRNSCLTKFKHKSPHHISGAFLFLCVLYMSLSSELLSITASLNLTSENFLYVSQSCSILPMSYSIKSMFSTKMAIREAFLIGLMVLSSGYMVALLWSHKKQAQHLHSNSLSLKASPEQRATRTIMLLMSFFVVFYILDSVIFYSRMKFKDDSIFVCVQIIVSHSYVTVSPFVFICTEKHIIKFFWSLCGRIVNI.

The Extracellular portion of the chain corresponds to 1 to 20; sequence MNKANIFCTDTNMKVILFSE. The chain crosses the membrane as a helical span at residues 21–41; it reads VSVGISANSILFISHLCMFLG. The Cytoplasmic segment spans residues 42–50; the sequence is ESRPKPIDL. A helical membrane pass occupies residues 51–71; the sequence is YIAFFSLTHLMLLVTMGLIAV. At 72-85 the chain is on the extracellular side; sequence DMFMPGGRWDSTTC. C85 and C171 are joined by a disulfide. Residues 86-106 traverse the membrane as a helical segment; that stretch reads TFLMYLHIVLRGPTLCATCLL. Topologically, residues 107-134 are cytoplasmic; that stretch reads NVLWTITLSPRNSCLTKFKHKSPHHISG. Residues 135-155 form a helical membrane-spanning segment; it reads AFLFLCVLYMSLSSELLSITA. Topologically, residues 156 to 192 are extracellular; it reads SLNLTSENFLYVSQSCSILPMSYSIKSMFSTKMAIRE. Residue N158 is glycosylated (N-linked (GlcNAc...) asparagine). The helical transmembrane segment at 193–213 threads the bilayer; the sequence is AFLIGLMVLSSGYMVALLWSH. The Cytoplasmic segment spans residues 214-237; sequence KKQAQHLHSNSLSLKASPEQRATR. A helical transmembrane segment spans residues 238-258; the sequence is TIMLLMSFFVVFYILDSVIFY. Topologically, residues 259 to 267 are extracellular; the sequence is SRMKFKDDS. A helical membrane pass occupies residues 268–288; the sequence is IFVCVQIIVSHSYVTVSPFVF. The Cytoplasmic segment spans residues 289–309; it reads ICTEKHIIKFFWSLCGRIVNI.

The protein belongs to the G-protein coupled receptor 1 family.

It is found in the cell membrane. In terms of biological role, putative pheromone receptor implicated in the regulation of social and reproductive behavior. This is Vomeronasal type-1 receptor 46 (Vmn1r46) from Mus musculus (Mouse).